The chain runs to 530 residues: Zinc finger protein ZIC 4 (530 aa).

Composition is skewed to basic residues over residues 31–40 (HHPHHHHHPP) and 97–113 (NPHHRHHHHHHHHHHMA). 2 disordered regions span residues 31-50 (HHPHHHHHPPHLPQSVTGYP) and 87-138 (PGAL…SYSS). Residues 284-317 (LICKWIEEDQLPKKLCSKTFSTMHELVTHVTVEH) form a C2H2-type 1; atypical zinc finger. The C2H2-type 2; atypical zinc-finger motif lies at 326–353 (HICFWEECPREGKPFKAKYKLVNHIRVH). 3 C2H2-type zinc fingers span residues 359–383 (FPCPFPGCGKVFARSENLKIHKRTH), 389–413 (FKCEFEGCDRRFANSSDRKKHSHVH), and 419–443 (YNCKVRGCDKSYTHPSSLRKHMKVH). The interval 432 to 530 (HPSSLRKHMK…YSNWQATNTF (99 aa)) is disordered. The segment covering 435 to 444 (SLRKHMKVHC) has biased composition (basic residues). 2 stretches are compositionally biased toward low complexity: residues 455–467 (SSIPSLVSPSSDS) and 474–485 (TSSQPEPPTSSQ). Polar residues predominate over residues 520-530 (SYSNWQATNTF).

The protein belongs to the GLI C2H2-type zinc-finger protein family. As to expression, at mid-gastrula stage (stage 11.5), weakly expressed in the prospective neural fold. Expressed in the neural plate border region at early neurula stage (stage 15) with strongest expression in the prospective regions of the hyoid and branchial crests. Expression in the dorsal central nervous system (CNS) continues through late neurula stage and early tail bud stages with expression strongest in the olfactory placode and expression levels increasing as development progresses. Becomes expressed in somites.

The protein localises to the nucleus. Functionally, may bind to DNA. Induces neural and neural crest differentiation. Does not induce anterior neural tissue. The protein is Zinc finger protein ZIC 4 (zic4) of Xenopus laevis (African clawed frog).